The chain runs to 118 residues: Large ribosomal subunit protein uL18 (118 aa).

This sequence belongs to the universal ribosomal protein uL18 family. In terms of assembly, part of the 50S ribosomal subunit; part of the 5S rRNA/L5/L18/L25 subcomplex. Contacts the 5S and 23S rRNAs.

In terms of biological role, this is one of the proteins that bind and probably mediate the attachment of the 5S RNA into the large ribosomal subunit, where it forms part of the central protuberance. This is Large ribosomal subunit protein uL18 from Levilactobacillus brevis (strain ATCC 367 / BCRC 12310 / CIP 105137 / JCM 1170 / LMG 11437 / NCIMB 947 / NCTC 947) (Lactobacillus brevis).